We begin with the raw amino-acid sequence, 745 residues long: Elongation factor G, mitochondrial (745 aa).

The region spanning Glu-40 to Gly-317 is the tr-type G domain. Residues Ala-49 to Thr-56, Asp-116 to His-120, and Asn-170 to Asp-173 each bind GTP.

Belongs to the TRAFAC class translation factor GTPase superfamily. Classic translation factor GTPase family. EF-G/EF-2 subfamily.

It localises to the mitochondrion. The protein operates within protein biosynthesis; polypeptide chain elongation. Its function is as follows. Mitochondrial GTPase that catalyzes the GTP-dependent ribosomal translocation step during translation elongation. During this step, the ribosome changes from the pre-translocational (PRE) to the post-translocational (POST) state as the newly formed A-site-bound peptidyl-tRNA and P-site-bound deacylated tRNA move to the P and E sites, respectively. Catalyzes the coordinated movement of the two tRNA molecules, the mRNA and conformational changes in the ribosome. Essential during development as it acts as a retrograde signal from mitochondria to the nucleus to slow down cell proliferation if mitochondrial energy output is low. The sequence is that of Elongation factor G, mitochondrial from Drosophila sechellia (Fruit fly).